A 275-amino-acid polypeptide reads, in one-letter code: Bis(5'-nucleosyl)-tetraphosphatase, symmetrical (275 aa).

Belongs to the Ap4A hydrolase family.

The enzyme catalyses P(1),P(4)-bis(5'-adenosyl) tetraphosphate + H2O = 2 ADP + 2 H(+). Functionally, hydrolyzes diadenosine 5',5'''-P1,P4-tetraphosphate to yield ADP. This Nitrosospira multiformis (strain ATCC 25196 / NCIMB 11849 / C 71) protein is Bis(5'-nucleosyl)-tetraphosphatase, symmetrical.